Reading from the N-terminus, the 451-residue chain is MREVISIHIGQAGIQVGNACWELYCLEHGIQPDGQMPSDKTIGGGDDAFNTFFSETGAGKHVPRCIFLDLEPTVVDEVRTGTYRQLFHPEQLISGKEDAANNFARGHYTIGKEIVDLALDRIRKLADNCTGLQGFLVFNAVGGGTGSGLGSLLLERLSVDYGKKSKLGFTVYPSPQVSTAVVEPYNSVLSTHSLLEHTDVAVMLDNEAIYDICRRSLDIERPTYTNLNRLIAQVISSLTASLRFDGALNVDITEFQTNLVPYPRIHFMLSSYAPIISAEKAYHEQLSVAEITNAAFEPASMMVKCDPLHGKYMACCLMYRGDVVPKDVNASVATIKTKRTIQFVDWCPTGFKCGINYQPPTVVPGVDLAKVQRAVCMISNSTAIGEIFSRLDHKFDLMYAKRAFVHWYVGEGMEEGEFSEAREDLAALEKDFEEVGAESAEGAGEGEGEEY.

A GTP-binding site is contributed by Q11. Position 40 is an N6-acetyllysine (K40). 6 residues coordinate GTP: E71, G144, T145, T179, N206, and N228. A Mg(2+)-binding site is contributed by E71. Residue E254 is part of the active site.

The protein belongs to the tubulin family. As to quaternary structure, dimer of alpha and beta chains. A typical microtubule is a hollow water-filled tube with an outer diameter of 25 nm and an inner diameter of 15 nM. Alpha-beta heterodimers associate head-to-tail to form protofilaments running lengthwise along the microtubule wall with the beta-tubulin subunit facing the microtubule plus end conferring a structural polarity. Microtubules usually have 13 protofilaments but different protofilament numbers can be found in some organisms and specialized cells. The cofactor is Mg(2+). Undergoes a tyrosination/detyrosination cycle, the cyclic removal and re-addition of a C-terminal tyrosine residue by the enzymes tubulin tyrosine carboxypeptidase (TTCP) and tubulin tyrosine ligase (TTL), respectively.

Its subcellular location is the cytoplasm. It is found in the cytoskeleton. The catalysed reaction is GTP + H2O = GDP + phosphate + H(+). Functionally, tubulin is the major constituent of microtubules, a cylinder consisting of laterally associated linear protofilaments composed of alpha- and beta-tubulin heterodimers. Microtubules grow by the addition of GTP-tubulin dimers to the microtubule end, where a stabilizing cap forms. Below the cap, tubulin dimers are in GDP-bound state, owing to GTPase activity of alpha-tubulin. This chain is Tubulin alpha-2 chain (TUBA2), found in Chlamydomonas reinhardtii (Chlamydomonas smithii).